The chain runs to 358 residues: Methylthioribose-1-phosphate isomerase (358 aa).

Substrate contacts are provided by residues Arg54 to Ala56, Arg96, and Gln205. Asp246 functions as the Proton donor in the catalytic mechanism. Residue Asn256 to Lys257 coordinates substrate.

The protein belongs to the eIF-2B alpha/beta/delta subunits family. MtnA subfamily.

The catalysed reaction is 5-(methylsulfanyl)-alpha-D-ribose 1-phosphate = 5-(methylsulfanyl)-D-ribulose 1-phosphate. The protein operates within amino-acid biosynthesis; L-methionine biosynthesis via salvage pathway; L-methionine from S-methyl-5-thio-alpha-D-ribose 1-phosphate: step 1/6. Functionally, catalyzes the interconversion of methylthioribose-1-phosphate (MTR-1-P) into methylthioribulose-1-phosphate (MTRu-1-P). This Pseudomonas fluorescens (strain Pf0-1) protein is Methylthioribose-1-phosphate isomerase.